Consider the following 210-residue polypeptide: MGSRWQMEKKHDPYYKKAKKEDYRSRASYKIKQLDKKFKLIKEGDTVVDLGAAPGGWSQVALEKVGEEGLVIGVDLNRIKPFPEENFHGIRGDFTTTEVQEKVMNLIGGKAKVVISDASPSLCGIKNIDQLRSIDLTNTVIGIADNILEPKGNLVMKVFQGPEYKDMLTRLKKKYRQVKTTKPPSSRKKSSEMYVVGLDFKPKKNKKSKD.

Positions 55, 57, 75, 93, and 117 each coordinate S-adenosyl-L-methionine. The active-site Proton acceptor is Lys-157. Residues 175-210 (YRQVKTTKPPSSRKKSSEMYVVGLDFKPKKNKKSKD) are disordered.

This sequence belongs to the class I-like SAM-binding methyltransferase superfamily. RNA methyltransferase RlmE family.

It is found in the cytoplasm. It catalyses the reaction uridine(2552) in 23S rRNA + S-adenosyl-L-methionine = 2'-O-methyluridine(2552) in 23S rRNA + S-adenosyl-L-homocysteine + H(+). Its function is as follows. Specifically methylates the uridine in position 2552 of 23S rRNA at the 2'-O position of the ribose in the fully assembled 50S ribosomal subunit. The polypeptide is Ribosomal RNA large subunit methyltransferase E (Methanobrevibacter smithii (strain ATCC 35061 / DSM 861 / OCM 144 / PS)).